Here is a 155-residue protein sequence, read N- to C-terminus: uncharacterized protein (155 aa).

Residues 1–21 (MFFIVAAGFVIAALIAAIGMA) form the signal peptide. A disordered region spans residues 35 to 155 (GQTKPATTRP…PVYRPPEEMV (121 aa)). The segment covering 118–128 (ATASNTPQNEA) has biased composition (polar residues).

This is an uncharacterized protein from Schizosaccharomyces pombe (strain 972 / ATCC 24843) (Fission yeast).